A 270-amino-acid polypeptide reads, in one-letter code: Elongation factor Ts (270 aa).

The interval 75 to 78 is involved in Mg(2+) ion dislocation from EF-Tu; sequence TDFV.

It belongs to the EF-Ts family.

The protein localises to the cytoplasm. Associates with the EF-Tu.GDP complex and induces the exchange of GDP to GTP. It remains bound to the aminoacyl-tRNA.EF-Tu.GTP complex up to the GTP hydrolysis stage on the ribosome. This Cutibacterium acnes (strain DSM 16379 / KPA171202) (Propionibacterium acnes) protein is Elongation factor Ts.